Here is an 87-residue protein sequence, read N- to C-terminus: Cytochrome c6 (87 aa).

4 residues coordinate heme c: Cys-14, Cys-17, His-18, and Met-58.

The protein belongs to the cytochrome c family. PetJ subfamily. In terms of assembly, monomer. In terms of processing, binds 1 heme c group covalently per subunit.

The protein resides in the cellular thylakoid lumen. Functionally, functions as an electron carrier between membrane-bound cytochrome b6-f and photosystem I in oxygenic photosynthesis. The polypeptide is Cytochrome c6 (petJ) (Aphanizomenon flos-aquae).